The following is a 178-amino-acid chain: uncharacterized protein (178 aa).

The first 20 residues, 1–20 (MKKLLVASLALLILTPVALA), serve as a signal peptide directing secretion.

This is an uncharacterized protein from Archaeoglobus fulgidus (strain ATCC 49558 / DSM 4304 / JCM 9628 / NBRC 100126 / VC-16).